The chain runs to 699 residues: eEF1A lysine and N-terminal methyltransferase (699 aa).

Met1 is subject to N-acetylmethionine. Phosphoserine is present on Ser267. The segment at 433-459 (VSHKAQKKRKKDRKKQRPADAEDLPAA) is disordered. Positions 436–448 (KAQKKRKKDRKKQ) are enriched in basic residues.

The protein belongs to the methyltransferase superfamily. In terms of assembly, forms a tripartite complex containing GAB1, METTL13 and SPRY2. Within the complex interacts with GAB1 and SPRY2.

The protein localises to the cytoplasm. It is found in the nucleus. Its subcellular location is the mitochondrion. It catalyses the reaction L-lysyl-[protein] + S-adenosyl-L-methionine = N(6)-methyl-L-lysyl-[protein] + S-adenosyl-L-homocysteine + H(+). The catalysed reaction is N(6)-methyl-L-lysyl-[protein] + S-adenosyl-L-methionine = N(6),N(6)-dimethyl-L-lysyl-[protein] + S-adenosyl-L-homocysteine + H(+). The enzyme catalyses N-terminal glycyl-L-lysyl-L-glutamyl-[protein] + 3 S-adenosyl-L-methionine = N-terminal N,N,N-trimethyl-glycyl-L-lysyl-L-glutamyl-[protein] + 3 S-adenosyl-L-homocysteine + 3 H(+). Its activity is regulated as follows. Protein N-terminal methyltransferase activity is inhibited by GTP and GDP. Dual methyltransferase that catalyzes methylation of elongation factor 1-alpha (EEF1A1 and EEF1A2) at two different positions, and is therefore involved in the regulation of mRNA translation. Via its C-terminus, methylates EEF1A1 and EEF1A2 at the N-terminal residue 'Gly-2'. Via its N-terminus dimethylates EEF1A1 and EEF1A2 at residue 'Lys-55'. Has no activity towards core histones H2A, H2B, H3 and H4. This chain is eEF1A lysine and N-terminal methyltransferase, found in Homo sapiens (Human).